Consider the following 409-residue polypeptide: Dual-specificity RNA methyltransferase RlmN (409 aa).

The active-site Proton acceptor is Glu126. The 242-residue stretch at 132–373 (EEGRGTLCLS…NQAGYASPIR (242 aa)) folds into the Radical SAM core domain. A disulfide bridge connects residues Cys139 and Cys384. The [4Fe-4S] cluster site is built by Cys146, Cys150, and Cys153. S-adenosyl-L-methionine is bound by residues 210-211 (GE), Ser242, 264-266 (SLH), and Asn341. Cys384 (S-methylcysteine intermediate) is an active-site residue.

The protein belongs to the radical SAM superfamily. RlmN family. The cofactor is [4Fe-4S] cluster.

Its subcellular location is the cytoplasm. It carries out the reaction adenosine(2503) in 23S rRNA + 2 reduced [2Fe-2S]-[ferredoxin] + 2 S-adenosyl-L-methionine = 2-methyladenosine(2503) in 23S rRNA + 5'-deoxyadenosine + L-methionine + 2 oxidized [2Fe-2S]-[ferredoxin] + S-adenosyl-L-homocysteine. It catalyses the reaction adenosine(37) in tRNA + 2 reduced [2Fe-2S]-[ferredoxin] + 2 S-adenosyl-L-methionine = 2-methyladenosine(37) in tRNA + 5'-deoxyadenosine + L-methionine + 2 oxidized [2Fe-2S]-[ferredoxin] + S-adenosyl-L-homocysteine. Its function is as follows. Specifically methylates position 2 of adenine 2503 in 23S rRNA and position 2 of adenine 37 in tRNAs. m2A2503 modification seems to play a crucial role in the proofreading step occurring at the peptidyl transferase center and thus would serve to optimize ribosomal fidelity. This is Dual-specificity RNA methyltransferase RlmN from Bartonella quintana (strain Toulouse) (Rochalimaea quintana).